The following is a 153-amino-acid chain: uncharacterized protein (153 aa).

The segment at 1–88 (MDKDRPGLPA…VPPPQLDHPG (88 aa)) is disordered.

This is an uncharacterized protein from Epstein-Barr virus (strain P3HR-1) (HHV-4).